Reading from the N-terminus, the 186-residue chain is Guanylate kinase (186 aa).

A Guanylate kinase-like domain is found at 4-182 (GKLIVLTGPS…TLQNLDKILF (179 aa)). 11–18 (GPSGVGKG) provides a ligand contact to ATP.

Belongs to the guanylate kinase family.

The protein resides in the cytoplasm. The enzyme catalyses GMP + ATP = GDP + ADP. In terms of biological role, essential for recycling GMP and indirectly, cGMP. The protein is Guanylate kinase of Trichodesmium erythraeum (strain IMS101).